Consider the following 271-residue polypeptide: Dihydropteroate synthase type-2 (271 aa).

The 259-residue stretch at 1-259 (MNKSLIIFGI…EPRPLRDGLA (259 aa)) folds into the Pterin-binding domain. Asparagine 12 is a 4-aminobenzoate binding site. Diphosphate-binding residues include asparagine 12, phenylalanine 18, serine 51, and serine 52. Asparagine 12 is a Mg(2+) binding site. Serine 52, aspartate 85, asparagine 104, aspartate 174, phenylalanine 179, lysine 213, and serine 214 together coordinate 7,8-dihydropteroate. The (7,8-dihydropterin-6-yl)methyl diphosphate site is built by aspartate 85, asparagine 104, and aspartate 174. 6-hydroxymethyl-7,8-dihydropterin-binding residues include asparagine 104 and aspartate 174. Lysine 213 is a (7,8-dihydropterin-6-yl)methyl diphosphate binding site. Residue lysine 213 participates in 6-hydroxymethyl-7,8-dihydropterin binding. Position 247 (arginine 247) interacts with 4-aminobenzoate. Diphosphate-binding residues include arginine 247 and histidine 249. 247 to 249 (RTH) contacts (7,8-dihydropterin-6-yl)methyl diphosphate.

It belongs to the DHPS family. Homodimer. The cofactor is Mg(2+).

The catalysed reaction is (7,8-dihydropterin-6-yl)methyl diphosphate + 4-aminobenzoate = 7,8-dihydropteroate + diphosphate. Its pathway is cofactor biosynthesis; tetrahydrofolate biosynthesis; 7,8-dihydrofolate from 2-amino-4-hydroxy-6-hydroxymethyl-7,8-dihydropteridine diphosphate and 4-aminobenzoate: step 1/2. Functionally, catalyzes the condensation of para-aminobenzoate (pABA) with 6-hydroxymethyl-7,8-dihydropterin diphosphate (DHPt-PP) to form 7,8-dihydropteroate (H2Pte), the immediate precursor of folate derivatives. Confers resistance to sulfonamide antibiotics, including sulfamethoxazole (SMX), sulfadiazine and sulfisoxazole. The type II enzyme is stable whereas type I DHPS loses its activity rapidly. In Escherichia coli, this protein is Dihydropteroate synthase type-2.